We begin with the raw amino-acid sequence, 252 residues long: Tabtoxin biosynthesis enzyme (252 aa).

The disordered stretch occupies residues 1–23 (MYQRTATQLARKPASKQGETEMN).

Its function is as follows. May play a role in tabtoxin biosynthesis. This chain is Tabtoxin biosynthesis enzyme (tblA), found in Pseudomonas amygdali pv. tabaci (Pseudomonas syringae pv. tabaci).